Reading from the N-terminus, the 481-residue chain is uncharacterized protein (481 aa).

Basic residues predominate over residues 1 to 18 (MSRLPSKTKYHSSHRSLN). The segment at 1-37 (MSRLPSKTKYHSSHRSLNRKTPLLQRSSETNSLRESG) is disordered. Polar residues predominate over residues 24 to 34 (LQRSSETNSLR). Transmembrane regions (helical) follow at residues 172 to 191 (SIST…AGAI) and 195 to 214 (AAAG…YLCW).

It localises to the membrane. This is an uncharacterized protein from Coxiella burnetii (strain RSA 493 / Nine Mile phase I).